Reading from the N-terminus, the 75-residue chain is Large ribosomal subunit protein bL31 (75 aa).

It belongs to the bacterial ribosomal protein bL31 family. Type A subfamily. In terms of assembly, part of the 50S ribosomal subunit.

Functionally, binds the 23S rRNA. This is Large ribosomal subunit protein bL31 from Pelodictyon phaeoclathratiforme (strain DSM 5477 / BU-1).